The chain runs to 700 residues: Glutamine synthetase (700 aa).

One can recognise a GS beta-grasp domain in the interval 65 to 155 (YHFTPPGSSP…LPTAFCSYGG (91 aa)). The GS catalytic domain occupies 159–589 (DRDSLLRSME…TMQEMIRKDL (431 aa)). Mg(2+) contacts are provided by E196, E198, E267, and E274. L-glutamate is bound by residues 318 to 319 (NG) and G319. Residue H323 participates in Mg(2+) binding. S327 and R435 together coordinate ATP. R435 is an L-glutamate binding site. E472 serves as a coordination point for Mg(2+).

The protein belongs to the glutamine synthetase family. As to quaternary structure, homohexamer. Mg(2+) is required as a cofactor.

It is found in the cytoplasm. The catalysed reaction is L-glutamate + NH4(+) + ATP = L-glutamine + ADP + phosphate + H(+). With respect to regulation, the activity of this enzyme is not controlled by adenylation. Catalyzes the ATP-dependent biosynthesis of glutamine from glutamate and ammonia. In Butyrivibrio fibrisolvens, this protein is Glutamine synthetase.